The chain runs to 391 residues: Alkanesulfonate monooxygenase (391 aa).

Belongs to the SsuD family.

It carries out the reaction an alkanesulfonate + FMNH2 + O2 = an aldehyde + FMN + sulfite + H2O + 2 H(+). Catalyzes the desulfonation of aliphatic sulfonates. The polypeptide is Alkanesulfonate monooxygenase (Methylorubrum extorquens (strain CM4 / NCIMB 13688) (Methylobacterium extorquens)).